We begin with the raw amino-acid sequence, 140 residues long: NTF2-related export protein 1 (140 aa).

A2 bears the N-acetylalanine mark. The NTF2 domain maps to 16 to 135; it reads AAEEFVNVYY…WKIASDCFRF (120 aa).

Heterodimer with NXF1. Forms a complex with RANGAP1, RANBP2/NUP358 and NXF1. Interacts (via NTF2 domain) with NXF1. Stabilizes the NTF2 domain of NXF1 by heterodimerization. The formation of NXF1-NXT1 heterodimers is required for the NXF1-mediated nuclear mRNA export. Preferentially binds Ran-GTP. Associates with NXF2, NXF3 and NXF5. Does not bind nucleoporins (NPC) directly, its association to NPC is mediated by NXF1.

The protein resides in the nucleus. The protein localises to the nucleus speckle. Its subcellular location is the cytoplasm. In terms of biological role, stimulator of protein export for NES-containing proteins. Also plays a role in the nuclear export of U1 snRNA, tRNA, and mRNA. The NXF1-NXT1 heterodimer is involved in the export of HSP70 mRNA in conjunction with ALYREF/THOC4 and THOC5. This chain is NTF2-related export protein 1 (NXT1), found in Bos taurus (Bovine).